The sequence spans 92 residues: CRISPR-associated endoribonuclease Cas2 3 (92 aa).

Aspartate 9 serves as a coordination point for Mg(2+).

It belongs to the CRISPR-associated endoribonuclease Cas2 protein family. In terms of assembly, homodimer, forms a heterotetramer with a Cas1 homodimer. Requires Mg(2+) as cofactor.

CRISPR (clustered regularly interspaced short palindromic repeat), is an adaptive immune system that provides protection against mobile genetic elements (viruses, transposable elements and conjugative plasmids). CRISPR clusters contain sequences complementary to antecedent mobile elements and target invading nucleic acids. CRISPR clusters are transcribed and processed into CRISPR RNA (crRNA). Functions as a ssRNA-specific endoribonuclease. Involved in the integration of spacer DNA into the CRISPR cassette. This chain is CRISPR-associated endoribonuclease Cas2 3, found in Synechocystis sp. (strain ATCC 27184 / PCC 6803 / Kazusa).